A 369-amino-acid chain; its full sequence is DNA replication and repair protein RecF (369 aa).

G30 to T37 is an ATP binding site.

This sequence belongs to the RecF family.

It localises to the cytoplasm. Its function is as follows. The RecF protein is involved in DNA metabolism; it is required for DNA replication and normal SOS inducibility. RecF binds preferentially to single-stranded, linear DNA. It also seems to bind ATP. This Bacteroides thetaiotaomicron (strain ATCC 29148 / DSM 2079 / JCM 5827 / CCUG 10774 / NCTC 10582 / VPI-5482 / E50) protein is DNA replication and repair protein RecF.